A 354-amino-acid chain; its full sequence is Guanine nucleotide-binding protein G(o) subunit alpha (354 aa).

Gly-2 carries N-myristoyl glycine lipidation. Cys-3 is lipidated: S-palmitoyl cysteine. The 323-residue stretch at Lys-32–Tyr-354 folds into the G-alpha domain. Residues Lys-35–Thr-48 are G1 motif. GTP-binding residues include Glu-43, Lys-46, Ser-47, Thr-48, Ser-152, Leu-176, Arg-177, Thr-178, and Arg-179. Residue Ser-47 participates in Mg(2+) binding. Residues Asp-174 to Thr-182 form a G2 motif region. ADP-ribosylarginine; by cholera toxin is present on Arg-179. Residue Thr-182 coordinates Mg(2+). The segment at Phe-197 to Arg-206 is G3 motif. Gln-205 bears the 5-glutamyl histamine mark. The interval Ile-266–Asp-273 is G4 motif. GTP-binding residues include Asn-270, Asp-273, and Cys-325. The interval Thr-324 to Thr-329 is G5 motif. Residue Cys-351 is the site of S-palmitoyl cysteine attachment. Cys-351 carries the post-translational modification ADP-ribosylcysteine; by pertussis toxin.

This sequence belongs to the G-alpha family. G(i/o/t/z) subfamily. In terms of assembly, g proteins are composed of 3 units; alpha, beta and gamma. The alpha chain contains the guanine nucleotide binding site. Forms a complex with GNB1 and GNG3. Interacts with RGS14. Interacts with RGS16. Interacts with RGS19. Interacts (when palmitoylated) with ADGRG3. In terms of processing, histaminylated at Gln-205 residues by TGM2. Palmitoylated at Cys-351, leading to binding to ADGRG3.

It localises to the cell membrane. Its subcellular location is the membrane. The enzyme catalyses GTP + H2O = GDP + phosphate + H(+). Its activity is regulated as follows. The GTPase activity is promoted by GTPAse activators, such as RGS14, RGS16 and RGS19. In terms of biological role, guanine nucleotide-binding proteins (G proteins) function as transducers downstream of G protein-coupled receptors (GPCRs) in numerous signaling cascades. The alpha chain contains the guanine nucleotide binding site and alternates between an active, GTP-bound state and an inactive, GDP-bound state. Signaling by an activated GPCR promotes GDP release and GTP binding. The alpha subunit has a low GTPase activity that converts bound GTP to GDP, thereby terminating the signal. Both GDP release and GTP hydrolysis are modulated by numerous regulatory proteins. Signaling is mediated via effector proteins, such as adenylate cyclase. Inhibits adenylate cyclase activity, leading to decreased intracellular cAMP levels. The sequence is that of Guanine nucleotide-binding protein G(o) subunit alpha (GNAO1) from Homo sapiens (Human).